The sequence spans 274 residues: Cytochrome b-c1 complex subunit Rieske, mitochondrial (274 aa).

The Mitochondrial matrix portion of the chain corresponds to 79–103 (SHTDVKVPDFCDYRRPEVLDSTKSS). Residues 104–140 (RESSEARKSFSYMVTAVTTVGVAYAAKNAVTQFVSSM) traverse the membrane as a helical segment. At 141–274 (SASADVLAMA…FTSDDMVVVG (134 aa)) the chain is on the mitochondrial intermembrane side. In terms of domain architecture, Rieske spans 187-272 (EAAVELSQLR…YEFTSDDMVV (86 aa)). [2Fe-2S] cluster is bound by residues Cys-217, His-219, Cys-236, His-239, and Ser-241. A disulfide bridge links Cys-222 with Cys-238.

This sequence belongs to the Rieske iron-sulfur protein family. As to quaternary structure, component of the ubiquinol-cytochrome c oxidoreductase (cytochrome b-c1 complex, complex III, CIII), a multisubunit enzyme composed of 11 subunits. The complex is composed of 3 respiratory subunits cytochrome b, cytochrome c1 and Rieske protein UQCRFS1, 2 core protein subunits UQCRC1/QCR1 and UQCRC2/QCR2, and 6 low-molecular weight protein subunits UQCRH/QCR6, UQCRB/QCR7, UQCRQ/QCR8, UQCR10/QCR9, UQCR11/QCR10 and subunit 9, the cleavage product of Rieske protein UQCRFS1. The complex exists as an obligatory dimer and forms supercomplexes (SCs) in the inner mitochondrial membrane with NADH-ubiquinone oxidoreductase (complex I, CI) and cytochrome c oxidase (complex IV, CIV), resulting in different assemblies (supercomplex SCI(1)III(2)IV(1) and megacomplex MCI(2)III(2)IV(2)). Incorporation of the Rieske protein UQCRFS1 is the penultimate step in complex III assembly. Interacts with TTC19, which is involved in the clearance of UQCRFS1 fragments. Component of the ubiquinol-cytochrome c oxidoreductase (cytochrome b-c1 complex, complex III, CIII). Subunit 9 corresponds to the mitochondrial targeting sequence (MTS) of Rieske protein UQCRFS1. It is retained after processing and incorporated inside complex III, where it remains bound to the complex and localizes between the 2 core subunits UQCRC1/QCR1 and UQCRC2/QCR2. [2Fe-2S] cluster serves as cofactor. In terms of processing, proteolytic processing is necessary for the correct insertion of UQCRFS1 in the complex III dimer. Several fragments are generated during UQCRFS1 insertion, most probably due to the endogenous matrix-processing peptidase (MPP) activity of the 2 core protein subunits UQCRC1/QCR1 and UQCRC2/QCR2, which are homologous to the 2 mitochondrial-processing peptidase (MPP) subunits beta-MPP and alpha-MPP respectively. The action of the protease is also necessary for the clearance of the UQCRFS1 fragments.

The protein localises to the mitochondrion inner membrane. It carries out the reaction a quinol + 2 Fe(III)-[cytochrome c](out) = a quinone + 2 Fe(II)-[cytochrome c](out) + 2 H(+)(out). Component of the ubiquinol-cytochrome c oxidoreductase, a multisubunit transmembrane complex that is part of the mitochondrial electron transport chain which drives oxidative phosphorylation. The respiratory chain contains 3 multisubunit complexes succinate dehydrogenase (complex II, CII), ubiquinol-cytochrome c oxidoreductase (cytochrome b-c1 complex, complex III, CIII) and cytochrome c oxidase (complex IV, CIV), that cooperate to transfer electrons derived from NADH and succinate to molecular oxygen, creating an electrochemical gradient over the inner membrane that drives transmembrane transport and the ATP synthase. The cytochrome b-c1 complex catalyzes electron transfer from ubiquinol to cytochrome c, linking this redox reaction to translocation of protons across the mitochondrial inner membrane, with protons being carried across the membrane as hydrogens on the quinol. In the process called Q cycle, 2 protons are consumed from the matrix, 4 protons are released into the intermembrane space and 2 electrons are passed to cytochrome c. The Rieske protein is a catalytic core subunit containing a [2Fe-2S] iron-sulfur cluster. It cycles between 2 conformational states during catalysis to transfer electrons from the quinol bound in the Q(0) site in cytochrome b to cytochrome c1. Incorporation of UQCRFS1 is the penultimate step in complex III assembly. Functionally, component of the ubiquinol-cytochrome c oxidoreductase (cytochrome b-c1 complex, complex III, CIII). UQCRFS1 undergoes proteolytic processing once it is incorporated in the complex III dimer. One of the fragments, called subunit 9, corresponds to its mitochondrial targeting sequence (MTS). The proteolytic processing is necessary for the correct insertion of UQCRFS1 in the complex III dimer, but the persistence of UQCRFS1-derived fragments may prevent newly imported UQCRFS1 to be processed and assembled into complex III and is detrimental for the complex III structure and function. This is Cytochrome b-c1 complex subunit Rieske, mitochondrial (UQCRFS1) from Colobus polykomos (Western black-and-white colobus monkey).